Here is a 614-residue protein sequence, read N- to C-terminus: Probable ATP-dependent RNA helicase DDX5 (614 aa).

The segment covering 1-15 (MSGYSSDRDRGRDRG) has biased composition (basic and acidic residues). The interval 1 to 39 (MSGYSSDRDRGRDRGFGAPRFGGSRAGPLSGKKFGNPGE) is disordered. A Phosphoserine modification is found at Ser24. N6-acetyllysine; alternate is present on Lys32. Lys32 participates in a covalent cross-link: Glycyl lysine isopeptide (Lys-Gly) (interchain with G-Cter in SUMO2); alternate. N6-acetyllysine occurs at positions 33 and 40. Lys45 participates in a covalent cross-link: Glycyl lysine isopeptide (Lys-Gly) (interchain with G-Cter in SUMO2). A Glycyl lysine isopeptide (Lys-Gly) (interchain with G-Cter in SUMO2); alternate cross-link involves residue Lys53. Lys53 participates in a covalent cross-link: Glycyl lysine isopeptide (Lys-Gly) (interchain with G-Cter in SUMO); alternate. Lys53 is covalently cross-linked (Glycyl lysine isopeptide (Lys-Gly) (interchain with G-Cter in SUMO1); alternate). Residues 94-122 (LNFYEANFPANVMDVIARQNFTEPTAIQA) carry the Q motif motif. ATP is bound by residues 114-116 (FTE), Gln121, and 138-145 (AQTGSGKT). One can recognise a Helicase ATP-binding domain in the interval 125–300 (WPVALSGLDM…EDFLKDYIHI (176 aa)). Lys236 is modified (N6-acetyllysine). The short motif at 248–251 (DEAD) is the DEAD box element. Tyr297 is modified (phosphotyrosine). One can recognise a Helicase C-terminal domain in the interval 328–475 (KLIRLMEEIM…AINPKLLQLV (148 aa)). Residues Lys340, Lys343, Lys388, Lys391, Lys411, Lys437, Lys451, and Lys470 each participate in a glycyl lysine isopeptide (Lys-Gly) (interchain with G-Cter in SUMO2) cross-link. Positions 477–504 (DRGSGRSRGRGGMKDDRRDRYSAGKRGG) are disordered. The transactivation domain stretch occupies residues 477 to 614 (DRGSGRSRGR…GYPMPTGYSQ (138 aa)). Residue Ser480 is modified to Phosphoserine. The segment covering 488-498 (GMKDDRRDRYS) has biased composition (basic and acidic residues). Position 520 is a phosphoserine (Ser520). Residue Lys523 forms a Glycyl lysine isopeptide (Lys-Gly) (interchain with G-Cter in SUMO2) linkage.

The protein belongs to the DEAD box helicase family. DDX5/DBP2 subfamily. As to quaternary structure, identified in the spliceosome C complex. Component of a ribonucleoprotein complex containing mRNAs and RNA-binding proteins including DDX5, HNRNPH2 and SRSF1 as well as splicing regulator ARVCF. Interacts with RBM4; the interaction occurs in an RNA-independent manner. Interacts with AGO1 and AGO2. Interacts with ESR1, AR, EP300, CREBBP, POLR2A, TP53, RUNX2 and HDAC1. Self-associates. Interacts with DDX17. Interacts with BRDT. The large PER complex involved in the repression of transcriptional termination is composed of at least PER2, CDK9, DDX5, DHX9, NCBP1 and POLR2A (active). Interacts with DHX36; this interaction occurs in a RNA-dependent manner. Interacts with NUPR1. Interacts with ERCC6. Interacts with DDX3X in the cytoplasm; this interaction may be more efficient when both proteins are unphosphorylated. In terms of processing, arg-502 is dimethylated, probably to asymmetric dimethylarginine. Post-translationally, sumoylated; sumoylation, promoted by PIAS1, promotes interaction with HDAC1 and transcriptional repression activity. Sumoylation also significantly increases stability, and reduces polyubiquitination. Polyubiquitinated, leading to proteasomal degradation. In terms of processing, weakly phosphorylated in the G1/S phase of the cell cycle and much more at G2/M, especially at Thr and Tyr residues.

The protein localises to the nucleus. Its subcellular location is the nucleolus. The protein resides in the nucleus speckle. It is found in the cytoplasm. It catalyses the reaction ATP + H2O = ADP + phosphate + H(+). Functionally, involved in the alternative regulation of pre-mRNA splicing; its RNA helicase activity is necessary for increasing tau exon 10 inclusion and occurs in a RBM4-dependent manner. Binds to the tau pre-mRNA in the stem-loop region downstream of exon 10. The rate of ATP hydrolysis is highly stimulated by single-stranded RNA. Involved in transcriptional regulation; the function is independent of the RNA helicase activity. Transcriptional coactivator for androgen receptor AR but probably not ESR1. Synergizes with DDX17 and SRA1 RNA to activate MYOD1 transcriptional activity and involved in skeletal muscle differentiation. Transcriptional coactivator for p53/TP53 and involved in p53/TP53 transcriptional response to DNA damage and p53/TP53-dependent apoptosis. Transcriptional coactivator for RUNX2 and involved in regulation of osteoblast differentiation. Acts as a transcriptional repressor in a promoter-specific manner; the function probably involves association with histone deacetylases, such as HDAC1. As component of a large PER complex is involved in the inhibition of 3' transcriptional termination of circadian target genes such as PER1 and NR1D1 and the control of the circadian rhythms. This is Probable ATP-dependent RNA helicase DDX5 (DDX5) from Homo sapiens (Human).